Reading from the N-terminus, the 376-residue chain is Heat-inducible transcription repressor HrcA (376 aa).

It belongs to the HrcA family.

Functionally, negative regulator of class I heat shock genes (grpE-dnaK-dnaJ and groELS operons). Prevents heat-shock induction of these operons. The chain is Heat-inducible transcription repressor HrcA from Chloroflexus aggregans (strain MD-66 / DSM 9485).